We begin with the raw amino-acid sequence, 129 residues long: Glycine cleavage system H protein (129 aa).

The Lipoyl-binding domain occupies 24–106 (TVVVGVTSYA…YGDGWLIKVR (83 aa)). At Lys65 the chain carries N6-lipoyllysine.

It belongs to the GcvH family. The glycine cleavage system is composed of four proteins: P, T, L and H. Requires (R)-lipoate as cofactor.

In terms of biological role, the glycine cleavage system catalyzes the degradation of glycine. The H protein shuttles the methylamine group of glycine from the P protein to the T protein. The sequence is that of Glycine cleavage system H protein from Gloeobacter violaceus (strain ATCC 29082 / PCC 7421).